Consider the following 230-residue polypeptide: Ribonuclease HII (230 aa).

In terms of domain architecture, RNase H type-2 spans 21-212 (GPVAGVDEVG…VRRVANGSGG (192 aa)). Positions 27, 28, and 121 each coordinate a divalent metal cation.

Belongs to the RNase HII family. Mn(2+) is required as a cofactor. Requires Mg(2+) as cofactor.

It localises to the cytoplasm. It catalyses the reaction Endonucleolytic cleavage to 5'-phosphomonoester.. In terms of biological role, endonuclease that specifically degrades the RNA of RNA-DNA hybrids. In Mycobacterium avium (strain 104), this protein is Ribonuclease HII.